Reading from the N-terminus, the 304-residue chain is Glycine--tRNA ligase alpha subunit (304 aa).

Belongs to the class-II aminoacyl-tRNA synthetase family. As to quaternary structure, tetramer of two alpha and two beta subunits.

It localises to the cytoplasm. It catalyses the reaction tRNA(Gly) + glycine + ATP = glycyl-tRNA(Gly) + AMP + diphosphate. The sequence is that of Glycine--tRNA ligase alpha subunit from Photorhabdus laumondii subsp. laumondii (strain DSM 15139 / CIP 105565 / TT01) (Photorhabdus luminescens subsp. laumondii).